The following is a 101-amino-acid chain: Alkene monooxygenase system, effector subunit (101 aa).

This sequence belongs to the TmoD/XamoD family. As to quaternary structure, monomer. The alkene monooxygenase multicomponent enzyme system is composed of an electron transfer component and a monooxygenase component interacting with the effector protein XamoD. The electron transfer component is composed of a ferredoxin reductase (XamoF) and a ferredoxin (XamoC), and the monooxygenase component is formed by a heterohexamer (dimer of heterotrimers) of two alpha subunits (XamoA), two beta subunits (XamoE) and two gamma subunits (XamoB).

The protein resides in the cytoplasm. Effector component of the alkene monooxygenase multicomponent enzyme system which catalyzes the O2- and NADH-dependent epoxidation of short chain (C2 to C6) alkenes to their corresponding epoxides. One possible role of this small protein might be to facilitate electron transfer between the reductase and ferredoxin components. The chain is Alkene monooxygenase system, effector subunit from Xanthobacter autotrophicus (strain ATCC BAA-1158 / Py2).